We begin with the raw amino-acid sequence, 373 residues long: MTDNSKIRVVVGMSGGVDSSVTALLLKEQGYDVIGVFMKNWDDTDEFGVCTATEDYKDVAAVADQIGIPYYSVNFEKEYWDRVFEYFLAEYRAGRTPNPDVMCNKEIKFKAFLDYAMTLGADYVATGHYAQVKRDENGTVYMLRGADNGKDQTYFLSQLSQEQLQKTLFPLGHLQKSEVREIAERAGLATAKKKDSTGICFIGEKNFKQFLSQYLPAQKGRMMTIDGRDMGEHAGLMYYTIGQRGGLGIGGQHGGDNQPWFVVGKDLSQNILYVGQGFYHEALMSNSLDASVIHFTREMPEEFTFECTAKFRYRQPDSQVTVHVREDKAEVVFAEPQRAITPGQAVVFYDGKECLGGGMIDMAYKNGQPCQYI.

ATP-binding positions include 12–19 (GMSGGVDS) and M38. An interaction with target base in tRNA region spans residues 98-100 (NPD). C103 acts as the Nucleophile in catalysis. The cysteines at positions 103 and 200 are disulfide-linked. G127 provides a ligand contact to ATP. Residues 150–152 (KDQ) form an interaction with tRNA region. The active-site Cysteine persulfide intermediate is C200. Residues 312–313 (RY) form an interaction with tRNA region.

Belongs to the MnmA/TRMU family.

The protein localises to the cytoplasm. The catalysed reaction is S-sulfanyl-L-cysteinyl-[protein] + uridine(34) in tRNA + AH2 + ATP = 2-thiouridine(34) in tRNA + L-cysteinyl-[protein] + A + AMP + diphosphate + H(+). In terms of biological role, catalyzes the 2-thiolation of uridine at the wobble position (U34) of tRNA, leading to the formation of s(2)U34. The polypeptide is tRNA-specific 2-thiouridylase MnmA (Streptococcus pyogenes serotype M2 (strain MGAS10270)).